The chain runs to 219 residues: Transcriptional regulator AcuR (219 aa).

Positions 1–25 (MPLTDTPPSVPQKPRRGRPRGAPDA) are disordered. The 61-residue stretch at 26–86 (SLAHQSLIRA…ALIEAYDTYF (61 aa)) folds into the HTH tetR-type domain. The segment at residues 49-68 (GVDEILKAARVPKGSFYHYF) is a DNA-binding region (H-T-H motif).

Its function is as follows. A transcriptional repressor for its operon. Probably binds to 2 operator sequences in the promoter. In Cereibacter sphaeroides (strain ATCC 17023 / DSM 158 / JCM 6121 / CCUG 31486 / LMG 2827 / NBRC 12203 / NCIMB 8253 / ATH 2.4.1.) (Rhodobacter sphaeroides), this protein is Transcriptional regulator AcuR (acuR).